We begin with the raw amino-acid sequence, 939 residues long: Intimin (939 aa).

The signal sequence occupies residues 1–41 (MITHGFYARTRHKHKLKKTFIMLSAGLGLFFYVNQNSFANG). A peptidoglycan-binding region spans residues 40–153 (NGENYFKLGS…KLTKMSPDVT (114 aa)). A sufficient for homodimerization region spans residues 40–153 (NGENYFKLGS…KLTKMSPDVT (114 aa)). The required for periplasmic localization stretch occupies residues 40 to 212 (NGENYFKLGS…LQAWLQHYGT (173 aa)). In terms of domain architecture, LysM spans 63 to 112 (LFYTLKTGETVADLSKSQDINLSTIWSLNKHLYSSESEMMKAAPGQQIIL). The segment at 189–430 (DTALGIAGNQ…PQYVNELRTL (242 aa)) is inverse autotransporter. The signature sequence for beta-barrel assembly machinery (BAM), which recognizes the unfolded beta-barrel in the periplasm stretch occupies residues 402-411 (LYSMQFRYQF). Big-1 domains follow at residues 560–653 (VTDF…VIFV) and 660–751 (ITEI…VEFF). The required and sufficient for interaction with intimin receptor Tir stretch occupies residues 750–939 (FFTTLTIDDG…ESNAYATCVK (190 aa)). A C-type lectin domain region spans residues 842 to 939 (LIVPNMSKRV…ESNAYATCVK (98 aa)). The tract at residues 842–939 (LIVPNMSKRV…ESNAYATCVK (98 aa)) is intimin receptor Tir-binding. The cysteines at positions 860 and 937 are disulfide-linked.

This sequence belongs to the intimin/invasin family. As to quaternary structure, homodimer. Interacts with Tir.

It localises to the cell outer membrane. An inverse autotransporter. Adhesin, which mediates attachment to the human intestine epithelial cells. Necessary for the production of attaching and effacing lesions on infected human tissue culture cells. Anchored to the outer membrane by binding to peptidoglycan (PGN) via its periplasmic domain, thus helping in receptor interactions during host invasion. PGN-binding may also aid in resisting mechanical and chemical stress during transit of the bacterium through the gastrointestinal tract of the host. Periplasmic domain binds purified E.coli PGN sacculi under acidic conditions in vitro and in vivo, but does not bind to chitin. Periplasmic domain binds PGN sacculi with an apparent dissociation constant (Kd) of 0.8 uM. No binding to PGN in vitro at normal physiological pH 7.4. The sequence is that of Intimin from Escherichia coli O127:H6 (strain E2348/69 / EPEC).